The following is a 163-amino-acid chain: NADH-quinone oxidoreductase subunit I (163 aa).

4Fe-4S ferredoxin-type domains follow at residues 53–83 (LRRY…IEAG) and 94–123 (VRYD…EGPN). [4Fe-4S] cluster contacts are provided by cysteine 63, cysteine 66, cysteine 69, cysteine 73, cysteine 103, cysteine 106, cysteine 109, and cysteine 113.

The protein belongs to the complex I 23 kDa subunit family. In terms of assembly, NDH-1 is composed of 14 different subunits. Subunits NuoA, H, J, K, L, M, N constitute the membrane sector of the complex. It depends on [4Fe-4S] cluster as a cofactor.

It is found in the cell inner membrane. It catalyses the reaction a quinone + NADH + 5 H(+)(in) = a quinol + NAD(+) + 4 H(+)(out). Its function is as follows. NDH-1 shuttles electrons from NADH, via FMN and iron-sulfur (Fe-S) centers, to quinones in the respiratory chain. The immediate electron acceptor for the enzyme in this species is believed to be ubiquinone. Couples the redox reaction to proton translocation (for every two electrons transferred, four hydrogen ions are translocated across the cytoplasmic membrane), and thus conserves the redox energy in a proton gradient. The sequence is that of NADH-quinone oxidoreductase subunit I from Brucella abortus (strain S19).